The primary structure comprises 107 residues: Biphenyl 2,3-dioxygenase, ferredoxin component (107 aa).

The Rieske domain maps to Thr-4–Val-99. [2Fe-2S] cluster-binding residues include Cys-43, His-45, Cys-62, and His-65.

It belongs to the bacterial ring-hydroxylating dioxygenase ferredoxin component family. As to quaternary structure, the multicomponent biphenyl dioxygenase system is composed of a ferredoxin reductase (BphA4), a ferredoxin (BphA3), and a terminal oxygenase (BphA1A2). It depends on [2Fe-2S] cluster as a cofactor.

It participates in xenobiotic degradation; biphenyl degradation. Ferredoxin component of the biphenyl dioxygenase system that catalyzes the stereospecific dihydroxylation of the aromatic ring of biphenyl, yielding a dihydrodiol compound. Is likely involved in biphenyl degradation that allows growth of Rhodococcus sp. strain RHA1 on biphenyl as the sole source of carbon and energy. The dioxygenase system can also use naphtalene and 4-chlorobiphenyl (4-CB) as substrates, as well as some polychlorinated biphenyls (PCB) such as 2,2'-dichlorobiphenyl, 2,3-dichlorobiphenyl and 2,5,2'-trichlorobiphenyl. It exhibits weak activity toward dibenzofuran and dibenzo-p-dioxin. Electrons are transferred from NADH to the [2Fe-2S] cluster in BphA1 via FAD of BphA4 and [2Fe-2S] cluster of BphA3. The polypeptide is Biphenyl 2,3-dioxygenase, ferredoxin component (Rhodococcus jostii (strain RHA1)).